The sequence spans 104 residues: Protein Rev (104 aa).

Ser-5 carries the post-translational modification Phosphoserine; by host CK2. Residues Val-18–Asn-26 are homomultimerization. The span at Ser-25 to Thr-34 shows a compositional bias: polar residues. Disordered stretches follow at residues Ser-25–Arg-48 and Cys-63–Glu-104. The Nuclear localization signal and RNA-binding (RRE) motif lies at Thr-34–Arg-50. Positions Arg-35–Arg-48 are enriched in basic residues. The span at Pro-67–Pro-77 shows a compositional bias: pro residues. Residues Leu-73–Asp-84 carry the Nuclear export signal and binding to XPO1 motif. Positions Thr-91 to Glu-104 are enriched in polar residues.

Belongs to the HIV-1 REV protein family. In terms of assembly, homomultimer; when bound to the RRE. Multimeric assembly is essential for activity and may involve XPO1. Binds to human KPNB1, XPO1, TNPO1, RANBP5 and IPO7. Interacts with the viral Integrase. Interacts with human KHDRBS1. Interacts with human NAP1; this interaction decreases Rev multimerization and stimulates its activity. Interacts with human DEAD-box helicases DDX3 and DDX24; these interactions may serve for viral RNA export to the cytoplasm and packaging, respectively. Interacts with human PSIP1; this interaction may inhibit HIV-1 DNA integration by promoting dissociation of the Integrase-LEDGF/p75 complex. In terms of processing, asymmetrically arginine dimethylated at one site by host PRMT6. Methylation impairs the RNA-binding activity and export of viral RNA from the nucleus to the cytoplasm. Phosphorylated by protein kinase CK2. Presence of, and maybe binding to the N-terminus of the regulatory beta subunit of CK2 is necessary for CK2-mediated Rev's phosphorylation.

It localises to the host nucleus. It is found in the host nucleolus. Its subcellular location is the host cytoplasm. In terms of biological role, escorts unspliced or incompletely spliced viral pre-mRNAs (late transcripts) out of the nucleus of infected cells. These pre-mRNAs carry a recognition sequence called Rev responsive element (RRE) located in the env gene, that is not present in fully spliced viral mRNAs (early transcripts). This function is essential since most viral proteins are translated from unspliced or partially spliced pre-mRNAs which cannot exit the nucleus by the pathway used by fully processed cellular mRNAs. Rev itself is translated from a fully spliced mRNA that readily exits the nucleus. Rev's nuclear localization signal (NLS) binds directly to KPNB1/Importin beta-1 without previous binding to KPNA1/Importin alpha-1. KPNB1 binds to the GDP bound form of RAN (Ran-GDP) and targets Rev to the nucleus. In the nucleus, the conversion from Ran-GDP to Ran-GTP dissociates Rev from KPNB1 and allows Rev's binding to the RRE in viral pre-mRNAs. Rev multimerization on the RRE via cooperative assembly exposes its nuclear export signal (NES) to the surface. Rev can then form a complex with XPO1/CRM1 and Ran-GTP, leading to nuclear export of the complex. Conversion from Ran-GTP to Ran-GDP mediates dissociation of the Rev/RRE/XPO1/RAN complex, so that Rev can return to the nucleus for a subsequent round of export. Beside KPNB1, also seems to interact with TNPO1/Transportin-1, RANBP5/IPO5 and IPO7/RANBP7 for nuclear import. The nucleoporin-like HRB/RIP is an essential cofactor that probably indirectly interacts with Rev to release HIV RNAs from the perinuclear region to the cytoplasm. This Human immunodeficiency virus type 1 group N (isolate YBF30) (HIV-1) protein is Protein Rev.